Reading from the N-terminus, the 512-residue chain is Bestrophin-2 (512 aa).

The Cytoplasmic portion of the chain corresponds to 1–31 (MTVTYTARVAKARFGGFSKLLLLWRGSIYKL). Ala-10 is a Ca(2+) binding site. A helical membrane pass occupies residues 32–51 (LWRELLCFLGLFMALSAAYR). The Extracellular segment spans residues 52–60 (FVLTEEQKR). Residues 61 to 82 (YFEKLVLYCDRYASLIPVSFVL) form a helical membrane-spanning segment. Residues 83–238 (GFYVTLVVHR…WISVPLVYTQ (156 aa)) lie on the Cytoplasmic side of the membrane. A helical membrane pass occupies residues 239–255 (VVTIAVYSYFLACLIGR). Residues 256 to 274 (QFLDPAQGYKDHDLDLCVP) are Extracellular-facing. Residues 275–288 (IFTLLQFFFYAGWL) traverse the membrane as a helical segment. Topologically, residues 289-512 (KVAEQLINPF…PIGEEEESLA (224 aa)) are cytoplasmic. Residues Gln-293, Asn-296, Asp-301, and Asp-304 each coordinate Ca(2+). Residues 453–512 (VDLGQPEPESEPITGPESPALVPAPRAPSEPLTVVPLSGTRGPAPPWLPSPIGEEEESLA) are disordered.

This sequence belongs to the anion channel-forming bestrophin (TC 1.A.46) family. Calcium-sensitive chloride channel subfamily. In terms of assembly, pentamer. Interacts with GLUL; this interaction tethers a fraction of GLUL to the membrane, causing a decrease of cytosolic glutamine synthase (GS) activity and inhibits the chloride channel activity of BEST2 by affecting the gating at the aperture in the absence of intracellular glutamate.

Its subcellular location is the cell membrane. The protein resides in the basolateral cell membrane. The enzyme catalyses chloride(in) = chloride(out). It carries out the reaction iodide(out) = iodide(in). The catalysed reaction is hydrogencarbonate(in) = hydrogencarbonate(out). It catalyses the reaction L-glutamate(out) = L-glutamate(in). The enzyme catalyses L-glutamine(out) = L-glutamine(in). Chloride channel activity is allosterically inhibited by GLUL/glutamine synthase (GS) which affects the gating at the aperture in the absence of intracellular glutamate. Inhibitory effect of GLUL is relieved upon increasing of intracellular level of L-glutamate. Functionally, ligand-gated anion channel that allows the movement of anions across cell membranes when activated by calcium (Ca2+). Transports a large specter of anions, namely mediates the movement of chloride, L-glutamate and iodide. Calcium-binding triggers the dilation of the aperture, but calcium-dependent gating is only effective when the size of the passing anion is bigger than the closed aperture. Mediates the calcium-activated hydrogencarbonate movement and participates in colonic hydrogencarbonate secretion concomitant with mucin secretion. In non-pigmented epithelium (NPE), mediates the efflux of intracellular L-glutamate; binding of intracellular L-glutamate activates and open both the neck and the aperture of the channel, leading to L-glutamate exit promoting chloride influx movement from the extracellular side in trans. Also exhibits a directional permeability for intracellular glutamine, in a similar manner as for L-glutamate. This Bos taurus (Bovine) protein is Bestrophin-2.